Consider the following 262-residue polypeptide: Acyl-[acyl-carrier-protein]--UDP-N-acetylglucosamine O-acyltransferase (262 aa).

The protein belongs to the transferase hexapeptide repeat family. LpxA subfamily. Homotrimer.

The protein localises to the cytoplasm. The catalysed reaction is a (3R)-hydroxyacyl-[ACP] + UDP-N-acetyl-alpha-D-glucosamine = a UDP-3-O-[(3R)-3-hydroxyacyl]-N-acetyl-alpha-D-glucosamine + holo-[ACP]. Its pathway is glycolipid biosynthesis; lipid IV(A) biosynthesis; lipid IV(A) from (3R)-3-hydroxytetradecanoyl-[acyl-carrier-protein] and UDP-N-acetyl-alpha-D-glucosamine: step 1/6. Involved in the biosynthesis of lipid A, a phosphorylated glycolipid that anchors the lipopolysaccharide to the outer membrane of the cell. The chain is Acyl-[acyl-carrier-protein]--UDP-N-acetylglucosamine O-acyltransferase from Psychromonas ingrahamii (strain DSM 17664 / CCUG 51855 / 37).